The chain runs to 286 residues: 4-diphosphocytidyl-2-C-methyl-D-erythritol kinase (286 aa).

Lys11 is a catalytic residue. 94–104 (PMGGGIGGGSS) is an ATP binding site. Asp136 is an active-site residue.

This sequence belongs to the GHMP kinase family. IspE subfamily.

The enzyme catalyses 4-CDP-2-C-methyl-D-erythritol + ATP = 4-CDP-2-C-methyl-D-erythritol 2-phosphate + ADP + H(+). It participates in isoprenoid biosynthesis; isopentenyl diphosphate biosynthesis via DXP pathway; isopentenyl diphosphate from 1-deoxy-D-xylulose 5-phosphate: step 3/6. Catalyzes the phosphorylation of the position 2 hydroxy group of 4-diphosphocytidyl-2C-methyl-D-erythritol. The chain is 4-diphosphocytidyl-2-C-methyl-D-erythritol kinase from Pseudomonas putida (strain ATCC 47054 / DSM 6125 / CFBP 8728 / NCIMB 11950 / KT2440).